The chain runs to 308 residues: UPF0282 protein YG5714_2245 (308 aa).

This sequence belongs to the UPF0282 family.

This is UPF0282 protein YG5714_2245 from Saccharolobus islandicus (strain Y.G.57.14 / Yellowstone #1) (Sulfolobus islandicus).